The sequence spans 301 residues: Thyroxine 5-deiodinase (301 aa).

Residues 1–41 (MSRQAAPRWVVGEGRGTLGGAATMLRSLLLHSLRLCSQTAS) lie on the Cytoplasmic side of the membrane. The helical; Signal-anchor for type II membrane protein transmembrane segment at 42–64 (CLVLFPRFLGTAFMLWLLDFLCI) threads the bilayer. Topologically, residues 65 to 301 (RKHLLGRRRR…QLHGPQPRRV (237 aa)) are extracellular. Residue selenocysteine 167 is part of the active site. Position 167 (selenocysteine 167) is a non-standard amino acid, selenocysteine.

It belongs to the iodothyronine deiodinase family. As to quaternary structure, monomer. Homodimer. May undergo minor heretodimerization with DIO1 and DIO2. In terms of tissue distribution, highly expressed in mammary gland. Detected at lower levels in kidney, and at very low levels in the other tissues.

Its subcellular location is the cell membrane. It is found in the endosome membrane. The enzyme catalyses 3,3',5'-triiodo-L-thyronine + iodide + A + H(+) = L-thyroxine + AH2. It catalyses the reaction 3,3'-diiodo-L-thyronine + iodide + A + H(+) = 3,3',5-triiodo-L-thyronine + AH2. The catalysed reaction is 3-iodo-L-thyronine + iodide + A + H(+) = 3,5-diiodo-L-thyronine + AH2. It carries out the reaction L-thyronine + iodide + A + H(+) = 3-iodo-L-thyronine + AH2. The enzyme catalyses 3',5'-diiodo-L-thyronine + iodide + A + H(+) = 3,3',5'-triiodo-L-thyronine + AH2. It catalyses the reaction 3'-iodo-L-thyronine + iodide + A + H(+) = 3,3'-diiodo-L-thyronine + AH2. The catalysed reaction is 3,3',5'-triiodothyronamine + iodide + A + H(+) = 3,3',5,5'-tetraiodothyronamine + AH2. It carries out the reaction 3',5'-diiodothyronamine + iodide + A + H(+) = 3,3',5'-triiodothyronamine + AH2. The enzyme catalyses 3,3'-diiodothyronamine + iodide + A + H(+) = 3,3',5-triiodothyronamine + AH2. It catalyses the reaction 3-iodothyronamine + iodide + A + H(+) = 3,5-diiodothyronamine + AH2. The catalysed reaction is 3'-iodothyronamine + iodide + A + H(+) = 3,3'-diiodothyronamine + AH2. It carries out the reaction thyronamine + iodide + A + H(+) = 3-iodothyronamine + AH2. Its function is as follows. Plays a crucial role in the metabolism of thyroid hormones (TH) and has specific roles in TH activation and inactivation by deiodination. Catalyzes the deiodination of L-thyroxine (T4) to 3,3',5'-triiodothyronine (rT3), 3,5,3'-triiodothyronine (T3) to 3,3'-diiodothyronine (3,3'-T2), 3,5-diiodothyronine (3,5-T2) to 3-monoiodothyronine (3-T1), rT3 to 3',5'-diiodothyronine (3',5'-T2) and 3,3'-T2 to 3'-monoiodothyronine (3'-T1) via inner-ring deiodination (IRD). Catalyzes the deiodination of 3-T1 to L-thyronine (T0) via outer-ring deiodination (ORD). Catalyzes the tyrosyl ring deiodinations of 3,3',5,5'-tetraiodothyronamine, 3,3',5'-triiodothyronamine, 3,5,3'-triiodothyronamine, 3,5-diiodothyronamine, 3,3'-diiodothyronamine and 3-iodothyronamine. In Bos taurus (Bovine), this protein is Thyroxine 5-deiodinase (DIO3).